A 135-amino-acid chain; its full sequence is UPF0355 protein SH2586 (135 aa).

The tract at residues 105–135 (NSSHDEVEENNSAYEEIDITHYANESKGPKS) is disordered.

The protein belongs to the UPF0355 family.

This chain is UPF0355 protein SH2586, found in Staphylococcus haemolyticus (strain JCSC1435).